The following is a 186-amino-acid chain: Probable GTP-binding protein EngB (186 aa).

Residues 18–186 form the EngB-type G domain; sequence DKVEICFIGR…LKKLLASEFK (169 aa). GTP is bound by residues 26 to 33, 52 to 56, 70 to 73, 137 to 140, and 166 to 168; these read GRSNVGKS, GRTQL, DLPG, TKID, and VSS. Residues Ser33 and Thr54 each contribute to the Mg(2+) site.

It belongs to the TRAFAC class TrmE-Era-EngA-EngB-Septin-like GTPase superfamily. EngB GTPase family. Mg(2+) is required as a cofactor.

Its function is as follows. Necessary for normal cell division and for the maintenance of normal septation. This chain is Probable GTP-binding protein EngB, found in Mycoplasmopsis pulmonis (strain UAB CTIP) (Mycoplasma pulmonis).